The sequence spans 529 residues: Bifunctional purine biosynthesis protein PurH (529 aa).

Positions 1–148 (MQQRRPVRRA…KNHKDVAIVV (148 aa)) constitute an MGS-like domain.

It belongs to the PurH family.

The catalysed reaction is (6R)-10-formyltetrahydrofolate + 5-amino-1-(5-phospho-beta-D-ribosyl)imidazole-4-carboxamide = 5-formamido-1-(5-phospho-D-ribosyl)imidazole-4-carboxamide + (6S)-5,6,7,8-tetrahydrofolate. It carries out the reaction IMP + H2O = 5-formamido-1-(5-phospho-D-ribosyl)imidazole-4-carboxamide. Its pathway is purine metabolism; IMP biosynthesis via de novo pathway; 5-formamido-1-(5-phospho-D-ribosyl)imidazole-4-carboxamide from 5-amino-1-(5-phospho-D-ribosyl)imidazole-4-carboxamide (10-formyl THF route): step 1/1. It participates in purine metabolism; IMP biosynthesis via de novo pathway; IMP from 5-formamido-1-(5-phospho-D-ribosyl)imidazole-4-carboxamide: step 1/1. The chain is Bifunctional purine biosynthesis protein PurH from Salmonella schwarzengrund (strain CVM19633).